A 541-amino-acid polypeptide reads, in one-letter code: Halolysin-like extracellular serine protease Nep (541 aa).

The segment at residues 1–33 is a signal peptide (tat-type signal); the sequence is MTRDTNSNVGRRSVLKAASALGAFLGLGGVASA. Positions 34–121 are excised as a propeptide; it reads TPGREPGPKK…DNATYETLEV (88 aa). In terms of domain architecture, Peptidase S8 spans 130–405; it reads QYAPQQVNCE…YGRVDAELAV (276 aa). Catalysis depends on charge relay system residues Asp-157, His-198, and Ser-351. A disordered region spans residues 403-453; that stretch reads LAVTTDPDNGDDDDDDDDDEDDPGDGECGDETNTATADGELSGGWGGNPSD. The segment covering 410-432 has biased composition (acidic residues); sequence DNGDDDDDDDDDEDDPGDGECGD.

This sequence belongs to the peptidase S8 family. Monomer. In terms of processing, exported by the Tat system. The position of the signal peptide cleavage has not been experimentally proven. After transport across the membrane, the propeptide is probably processed autocatalytically, yielding the mature fully active protease.

It is found in the secreted. With respect to regulation, dependent on high salt concentrations for activity and stability. Strongly inhibited by the serine protease inhibitors diisopropyl fluorophosphate (DFP), phenylmethyl sulfonylfluoride (PMSF) and chymostatin. Also inhibited by denaturing agents such as SDS, urea, and HCl guanidinium. Activated by thiol-containing reducing agents such as dithiotreitol (DTT) and 2-mercaptoethanol. Its function is as follows. Serine protease that hydrolyzes large proteins such as casein and gelatin. Cleaves preferentially at the carboxyl terminus of Phe, Tyr or Leu. Is also able to catalyze peptide synthesis under different salt concentrations in the presence of dimethyl sulfoxide (DMSO). This chain is Halolysin-like extracellular serine protease Nep, found in Natrialba magadii.